We begin with the raw amino-acid sequence, 948 residues long: Glycine dehydrogenase (decarboxylating) (948 aa).

Lysine 696 bears the N6-(pyridoxal phosphate)lysine mark.

The protein belongs to the GcvP family. As to quaternary structure, the glycine cleavage system is composed of four proteins: P, T, L and H. Pyridoxal 5'-phosphate is required as a cofactor.

It catalyses the reaction N(6)-[(R)-lipoyl]-L-lysyl-[glycine-cleavage complex H protein] + glycine + H(+) = N(6)-[(R)-S(8)-aminomethyldihydrolipoyl]-L-lysyl-[glycine-cleavage complex H protein] + CO2. In terms of biological role, the glycine cleavage system catalyzes the degradation of glycine. The P protein binds the alpha-amino group of glycine through its pyridoxal phosphate cofactor; CO(2) is released and the remaining methylamine moiety is then transferred to the lipoamide cofactor of the H protein. The sequence is that of Glycine dehydrogenase (decarboxylating) from Akkermansia muciniphila (strain ATCC BAA-835 / DSM 22959 / JCM 33894 / BCRC 81048 / CCUG 64013 / CIP 107961 / Muc).